Consider the following 224-residue polypeptide: Non-structural protein V (224 aa).

The span at 54-65 (QKNIQHPTASHQ) shows a compositional bias: polar residues. 2 disordered regions span residues 54-94 (QKNI…TQIP) and 150-172 (TEFK…GHRR). Zn(2+) contacts are provided by His170, Cys189, Cys193, Cys205, Cys207, Cys210, Cys214, and Cys217.

This sequence belongs to the paramyxoviruses V protein family. As to quaternary structure, interacts with host IFIH1/MDA5 and DHX58/LGP2. Forms with host DDB1, CUL4A, STAT1, STAT2 and STAT3 the mumps virus V-dependent complex (VDC).

The protein localises to the virion. The protein resides in the host cytoplasm. Plays an essential role in the inhibition of host immune response. Prevents the establishment of cellular antiviral state by blocking interferon-alpha/beta (IFN-alpha/beta) production and signaling pathway. Interacts with host IFIH1/MDA5 and DHX58/LGP2 to inhibit the transduction pathway involved in the activation of IFN-beta promoter, thus protecting the virus against cell antiviral state. Blocks the type I and II interferon signaling pathways by interacting with host STAT1, STAT2 and STAT3, and mediating their ubiquitination and subsequent proteasomal degradation. This chain is Non-structural protein V, found in Homo sapiens (Human).